Reading from the N-terminus, the 952-residue chain is Ubiquitin carboxyl-terminal hydrolase 15 (952 aa).

At A2 the chain carries N-acetylalanine. The segment at 2–223 (AEGGAADLDT…KNEDGTWPRG (222 aa)) is mediates interaction with SART3. Positions 7-118 (ADLDTQRSDI…GQEPIARKVV (112 aa)) constitute a DUSP domain. Residues 260-904 (CGLSNLGNTC…AAYVLFYQRQ (645 aa)) enclose the USP domain. Residue C269 is the Nucleophile of the active site. T573 carries the post-translational modification Phosphothreonine. Residues 597-665 (ETDGPLRCCE…GGDNDSENGL (69 aa)) form a disordered region. Positions 627–644 (METDEPDDESSQDQELPS) are enriched in acidic residues. Residue H862 is the Proton acceptor of the active site. Residues 923–952 (SAATGVPLESDEDSNDNDNDLENENCMHTN) are disordered. Residues 931 to 945 (ESDEDSNDNDNDLEN) are compositionally biased toward acidic residues. A phosphoserine mark is found at S932 and S936.

It belongs to the peptidase C19 family. In terms of assembly, a homodimer structure has been reported; however it is unclear whether the protein form a homodimer in vivo. Identified in a complex with the COP9 signalosome complex (CSN). Interacts with SMAD1, SMAD2 and SMAD3; the interaction is direct. Forms a complex with SMURF2 and SMAD7. Interacts with TGFBR1. Interacts with SART3; the interaction is direct. May interact with RNF20 and RNF40. May interact with PRKN. Interacts with INCA1. In terms of processing, phosphorylated. Phosphorylation protects against ubiquitination and subsequent degradation by the proteasome. Ubiquitinated, leading to degradation by the proteasome. Highly expressed in testis and spleen, and at lower level in other tissues.

The protein localises to the cytoplasm. It localises to the nucleus. It is found in the mitochondrion. It catalyses the reaction Thiol-dependent hydrolysis of ester, thioester, amide, peptide and isopeptide bonds formed by the C-terminal Gly of ubiquitin (a 76-residue protein attached to proteins as an intracellular targeting signal).. Its function is as follows. Hydrolase that removes conjugated ubiquitin from target proteins and regulates various pathways such as the TGF-beta receptor signaling, NF-kappa-B and RNF41/NRDP1-PRKN pathways. Acts as a key regulator of TGF-beta receptor signaling pathway, but the precise mechanism is still unclear: according to a report, acts by promoting deubiquitination of monoubiquitinated R-SMADs (SMAD1, SMAD2 and/or SMAD3), thereby alleviating inhibition of R-SMADs and promoting activation of TGF-beta target genes. According to another reports, regulates the TGF-beta receptor signaling pathway by mediating deubiquitination and stabilization of TGFBR1, leading to an enhanced TGF-beta signal. Able to mediate deubiquitination of monoubiquitinated substrates, 'Lys-27'-, 'Lys-48'- and 'Lys-63'-linked polyubiquitin chains. May also regulate gene expression and/or DNA repair through the deubiquitination of histone H2B. Acts as an inhibitor of mitophagy by counteracting the action of parkin (PRKN): hydrolyzes cleavage of 'Lys-48'- and 'Lys-63'-linked polyubiquitin chains attached by parkin on target proteins such as MFN2, thereby reducing parkin's ability to drive mitophagy. Acts as an associated component of COP9 signalosome complex (CSN) and regulates different pathways via this association: regulates NF-kappa-B by mediating deubiquitination of NFKBIA and deubiquitinates substrates bound to VCP. Involved in endosome organization by mediating deubiquitination of SQSTM1: ubiquitinated SQSTM1 forms a molecular bridge that restrains cognate vesicles in the perinuclear region and its deubiquitination releases target vesicles for fast transport into the cell periphery. Acts as a negative regulator of antifungal immunity by mediating 'Lys-27'-linked deubiquitination of CARD9, thereby inactivating CARD9. The sequence is that of Ubiquitin carboxyl-terminal hydrolase 15 (Usp15) from Rattus norvegicus (Rat).